A 154-amino-acid chain; its full sequence is Large ribosomal subunit protein uL13 (154 aa).

Belongs to the universal ribosomal protein uL13 family. In terms of assembly, part of the 50S ribosomal subunit.

This protein is one of the early assembly proteins of the 50S ribosomal subunit, although it is not seen to bind rRNA by itself. It is important during the early stages of 50S assembly. The protein is Large ribosomal subunit protein uL13 of Rhodospirillum centenum (strain ATCC 51521 / SW).